The chain runs to 312 residues: Glyoxylate/hydroxypyruvate reductase A (312 aa).

The active site involves Arg-227. His-275 serves as the catalytic Proton donor.

This sequence belongs to the D-isomer specific 2-hydroxyacid dehydrogenase family. GhrA subfamily.

It localises to the cytoplasm. It carries out the reaction glycolate + NADP(+) = glyoxylate + NADPH + H(+). The enzyme catalyses (R)-glycerate + NAD(+) = 3-hydroxypyruvate + NADH + H(+). The catalysed reaction is (R)-glycerate + NADP(+) = 3-hydroxypyruvate + NADPH + H(+). Catalyzes the NADPH-dependent reduction of glyoxylate and hydroxypyruvate into glycolate and glycerate, respectively. In Enterobacter sp. (strain 638), this protein is Glyoxylate/hydroxypyruvate reductase A.